Reading from the N-terminus, the 301-residue chain is Sulfate adenylyltransferase subunit 2 (301 aa).

Residues 279-301 (RQGRMIDHDSSGSMEEKKKQGYF) form a disordered region.

This sequence belongs to the PAPS reductase family. CysD subfamily. In terms of assembly, heterodimer composed of CysD, the smaller subunit, and CysN.

The catalysed reaction is sulfate + ATP + H(+) = adenosine 5'-phosphosulfate + diphosphate. It participates in sulfur metabolism; hydrogen sulfide biosynthesis; sulfite from sulfate: step 1/3. With CysN forms the ATP sulfurylase (ATPS) that catalyzes the adenylation of sulfate producing adenosine 5'-phosphosulfate (APS) and diphosphate, the first enzymatic step in sulfur assimilation pathway. APS synthesis involves the formation of a high-energy phosphoric-sulfuric acid anhydride bond driven by GTP hydrolysis by CysN coupled to ATP hydrolysis by CysD. The protein is Sulfate adenylyltransferase subunit 2 of Marinomonas sp. (strain MWYL1).